We begin with the raw amino-acid sequence, 536 residues long: Probable tyrosyl-DNA phosphodiesterase (536 aa).

The active-site Nucleophile is His-122. Lys-124 contributes to the substrate binding site. The segment at 315–318 (SMGS) is interaction with DNA. His-401 (proton donor/acceptor) is an active-site residue. Substrate is bound at residue Lys-403.

This sequence belongs to the tyrosyl-DNA phosphodiesterase family.

The protein resides in the nucleus. Functionally, DNA repair enzyme that can remove a variety of covalent adducts from DNA through hydrolysis of a 3'-phosphodiester bond, giving rise to DNA with a free 3' phosphate. Catalyzes the hydrolysis of dead-end complexes between DNA and the topoisomerase I active site tyrosine residue. Hydrolyzes 3'-phosphoglycolates on protruding 3' ends on DNA double-strand breaks due to DNA damage by radiation and free radicals. Acts on blunt-ended double-strand DNA breaks and on single-stranded DNA. May have low 3'exonuclease activity and may be able to remove a single nucleoside from the 3'end of DNA and RNA molecules with 3'hydroxyl groups. Has no exonuclease activity towards DNA or RNA with a 3'phosphate. This chain is Probable tyrosyl-DNA phosphodiesterase, found in Schizosaccharomyces pombe (strain 972 / ATCC 24843) (Fission yeast).